Reading from the N-terminus, the 143-residue chain is Transcriptional regulator MraZ (143 aa).

2 consecutive SpoVT-AbrB domains span residues Glu-5 to Glu-47 and Ala-76 to Arg-119.

The protein belongs to the MraZ family. Forms oligomers.

It is found in the cytoplasm. Its subcellular location is the nucleoid. The sequence is that of Transcriptional regulator MraZ from Enterococcus faecalis (strain ATCC 700802 / V583).